Reading from the N-terminus, the 460-residue chain is Muscarinic acetylcholine receptor M1 (460 aa).

Residues 1-22 (MNTSAPPAVSPNITVLAPGKGP) are Extracellular-facing. N-linked (GlcNAc...) asparagine glycans are attached at residues asparagine 2 and asparagine 12. The chain crosses the membrane as a helical span at residues 23-48 (WQVAFIGITTGLLSLATVTGNLLVLI). Residues 49–62 (SFKVNTELKTVNNY) lie on the Cytoplasmic side of the membrane. A helical membrane pass occupies residues 63–84 (FLLSLACADLIIGTFSMNLYTT). Topologically, residues 85 to 95 (YLLMGHWALGT) are extracellular. The helical transmembrane segment at 96–121 (LACDLWLALDYVASNASVMNLLLISF) threads the bilayer. Cysteines 98 and 178 form a disulfide. The Cytoplasmic segment spans residues 122-142 (DRYFSVTRPLSYRAKRTPRRA). Residues 143–164 (ALMIGLAWLVSFVLWAPAILFW) traverse the membrane as a helical segment. Residues 165-185 (QYLVGERTVLAGQCYIQFLSQ) are Extracellular-facing. A helical transmembrane segment spans residues 186 to 209 (PIITFGTAMAAFYLPVTVMCTLYW). The Cytoplasmic portion of the chain corresponds to 210-366 (RIYRETENRA…LVKEKKAART (157 aa)). Disordered stretches follow at residues 225–256 (LQGSETPGKGGGSSSSSERSQPGAEGSPETPP), 274–297 (WKEEEEEDEGSMESLTSSEGEEPG), and 310–351 (EAQA…QLAK). Threonine 230 carries the post-translational modification Phosphothreonine. A compositionally biased stretch (low complexity) spans 238–247 (SSSSERSQPG). A compositionally biased stretch (basic residues) spans 328–343 (RPTKKGRDRAGKGQKP). A helical membrane pass occupies residues 367 to 390 (LSAILLAFILTWTPYNIMVLVSTF). Topologically, residues 391 to 397 (CKDCVPE) are extracellular. Residues 398-420 (TLWELGYWLCYVNSTINPMCYAL) form a helical membrane-spanning segment. At 421–460 (CNKAFRDTFRLLLLCRWDKRRWRKIPKRPGSVHRTPSRQC) the chain is on the cytoplasmic side. The residue at position 428 (threonine 428) is a Phosphothreonine. Residue serine 451 is modified to Phosphoserine. Threonine 455 bears the Phosphothreonine mark. Residue serine 457 is modified to Phosphoserine.

This sequence belongs to the G-protein coupled receptor 1 family. Muscarinic acetylcholine receptor subfamily. CHRM1 sub-subfamily. Interacts with GPRASP2. Interacts with TMEM147.

The protein resides in the cell membrane. It is found in the postsynaptic cell membrane. The muscarinic acetylcholine receptor mediates various cellular responses, including inhibition of adenylate cyclase, breakdown of phosphoinositides and modulation of potassium channels through the action of G proteins. Primary transducing effect is Pi turnover. This is Muscarinic acetylcholine receptor M1 (CHRM1) from Homo sapiens (Human).